The following is a 479-amino-acid chain: Poly(A) polymerase catalytic subunit (479 aa).

Active-site residues include Asp-202 and Asp-204. Asp-202, Asp-204, and Asp-253 together coordinate Ca(2+).

The protein belongs to the poxviridae poly(A) polymerase catalytic subunit family. Heterodimer of a large (catalytic) subunit and a small (regulatory) subunit.

The catalysed reaction is RNA(n) + ATP = RNA(n)-3'-adenine ribonucleotide + diphosphate. Functionally, polymerase that creates the 3'-poly(A) tail of mRNA's. The protein is Poly(A) polymerase catalytic subunit (OPG063) of Homo sapiens (Human).